We begin with the raw amino-acid sequence, 576 residues long: Ecdysone receptor (576 aa).

The interval 1–162 is modulating; that stretch reads MSLGARGYRR…GPAPRQQEEL (162 aa). Residues 87–154 are disordered; it reads CTMEQQQPQP…GEARRQKKGP (68 aa). Residues 91 to 106 are compositionally biased toward low complexity; that stretch reads QQQPQPQQQPQQTQPL. Residues 107-117 are compositionally biased toward pro residues; the sequence is PSMPLPMPPTT. 2 NR C4-type zinc fingers span residues 163-183 and 199-223; these read CLVC…CEGC and CKFG…LKKC. Residues 163 to 235 constitute a DNA-binding region (nuclear receptor); that stretch reads CLVCGDRASG…VGMRPECVVP (73 aa). The tract at residues 245-269 is disordered; it reads EKKAQREKDKLPVSTTTVDDHMPPI. Residues 314–548 enclose the NR LBD domain; the sequence is NQKSLIARLV…FLEEIWDVAD (235 aa).

It belongs to the nuclear hormone receptor family. NR1 subfamily.

The protein resides in the nucleus. In terms of biological role, receptor for ecdysone. Binds to ecdysone response elements (ECRES). The polypeptide is Ecdysone receptor (EcR) (Heliothis virescens (Tobacco budworm moth)).